The following is a 686-amino-acid chain: tRNA wybutosine-synthesizing protein 4 (686 aa).

The segment at 1 to 22 (MGPRSRQRRTGTVQSTNDSSSL) is disordered. Residues 10–22 (TGTVQSTNDSSSL) are compositionally biased toward polar residues. S-adenosyl-L-methionine contacts are provided by residues R59, G89, D114, 161 to 162 (DL), and E188.

Belongs to the methyltransferase superfamily. LCMT family. In terms of assembly, interacts with RNF144B/IBRDC2.

The enzyme catalyses 7-[(3S)-3-amino-3-carboxypropyl]wyosine(37) in tRNA(Phe) + S-adenosyl-L-methionine = 7-[(3S)-(3-amino-3-methoxycarbonyl)propyl]wyosine(37) in tRNA(Phe) + S-adenosyl-L-homocysteine. It catalyses the reaction 7-[(3S)-(3-amino-3-methoxycarbonyl)propyl]wyosine(37) in tRNA(Phe) + S-adenosyl-L-methionine + CO2 = wybutosine(37) in tRNA(Phe) + S-adenosyl-L-homocysteine + 2 H(+). It functions in the pathway tRNA modification; wybutosine-tRNA(Phe) biosynthesis. In terms of biological role, probable S-adenosyl-L-methionine-dependent methyltransferase that acts as a component of the wybutosine biosynthesis pathway. Wybutosine is a hyper modified guanosine with a tricyclic base found at the 3'-position adjacent to the anticodon of eukaryotic phenylalanine tRNA. May methylate the carboxyl group of leucine residues to form alpha-leucine ester residues. The protein is tRNA wybutosine-synthesizing protein 4 (Lcmt2) of Rattus norvegicus (Rat).